A 271-amino-acid chain; its full sequence is Phycocyanobilin lyase subunit alpha (271 aa).

The protein belongs to the CpcE/RpcE/PecE family. CpcE and CpcF associate to form a lyase.

Its function is as follows. Required for the chromophorylation of the cpcA1 gene product. This chain is Phycocyanobilin lyase subunit alpha (cpcE1), found in Pseudanabaena tenuis (strain PCC 7409).